We begin with the raw amino-acid sequence, 308 residues long: Methionyl-tRNA formyltransferase (308 aa).

109–112 (SLLP) serves as a coordination point for (6S)-5,6,7,8-tetrahydrofolate.

It belongs to the Fmt family.

It carries out the reaction L-methionyl-tRNA(fMet) + (6R)-10-formyltetrahydrofolate = N-formyl-L-methionyl-tRNA(fMet) + (6S)-5,6,7,8-tetrahydrofolate + H(+). Its function is as follows. Attaches a formyl group to the free amino group of methionyl-tRNA(fMet). The formyl group appears to play a dual role in the initiator identity of N-formylmethionyl-tRNA by promoting its recognition by IF2 and preventing the misappropriation of this tRNA by the elongation apparatus. The protein is Methionyl-tRNA formyltransferase of Caulobacter vibrioides (strain NA1000 / CB15N) (Caulobacter crescentus).